A 205-amino-acid polypeptide reads, in one-letter code: Small ribosomal subunit protein mS26 (205 aa).

The N-terminal 27 residues, 1 to 27, are a transit peptide targeting the mitochondrion; that stretch reads MLRALSRLGAGTPCRPRAPLVLPARGR.

This sequence belongs to the mitochondrion-specific ribosomal protein mS26 family. Component of the mitochondrial small ribosomal subunit (mt-SSU). Mature mammalian 55S mitochondrial ribosomes consist of a small (28S) and a large (39S) subunit. The 28S small subunit contains a 12S ribosomal RNA (12S mt-rRNA) and 30 different proteins. The 39S large subunit contains a 16S rRNA (16S mt-rRNA), a copy of mitochondrial valine transfer RNA (mt-tRNA(Val)), which plays an integral structural role, and 52 different proteins.

It localises to the mitochondrion. This Homo sapiens (Human) protein is Small ribosomal subunit protein mS26 (MRPS26).